The following is a 76-amino-acid chain: DNA gyrase inhibitor YacG (76 aa).

Cys-7, Cys-10, Cys-26, and Cys-30 together coordinate Zn(2+).

Belongs to the DNA gyrase inhibitor YacG family. In terms of assembly, interacts with GyrB. Requires Zn(2+) as cofactor.

Functionally, inhibits all the catalytic activities of DNA gyrase by preventing its interaction with DNA. Acts by binding directly to the C-terminal domain of GyrB, which probably disrupts DNA binding by the gyrase. This chain is DNA gyrase inhibitor YacG, found in Pseudoalteromonas translucida (strain TAC 125).